The sequence spans 404 residues: Protein IQ-DOMAIN 12 (404 aa).

The calmodulin-binding stretch occupies residues 8–25 (FGWMKRLFICEAKARAEK). The short motif at 11–18 (MKRLFICE) is the Nuclear localization signal 1 element. 2 consecutive IQ domains span residues 108–135 (NVAA…ALVR) and 136–158 (LQAI…SSHS). The short motif at 226 to 233 (IKRDRMLK) is the Nuclear localization signal 2 element.

It belongs to the IQD family. As to quaternary structure, binds to multiple calmodulin (CaM) in the presence of Ca(2+) and CaM-like proteins.

It localises to the nucleus. The protein resides in the cell membrane. Functionally, may be involved in cooperative interactions with calmodulins or calmodulin-like proteins. Recruits calmodulin proteins to microtubules, thus being a potential scaffold in cellular signaling and trafficking. May associate with nucleic acids and regulate gene expression at the transcriptional or post-transcriptional level. This chain is Protein IQ-DOMAIN 12, found in Arabidopsis thaliana (Mouse-ear cress).